Here is a 146-residue protein sequence, read N- to C-terminus: NADH-quinone oxidoreductase subunit A (146 aa).

A run of 3 helical transmembrane segments spans residues 14 to 34, 66 to 86, and 96 to 116; these read FAVF…GAFF, FYLV…LYAW, and VGFI…VYLV.

Belongs to the complex I subunit 3 family. In terms of assembly, NDH-1 is composed of 13 different subunits. Subunits NuoA, H, J, K, L, M, N constitute the membrane sector of the complex.

It is found in the cell inner membrane. It carries out the reaction a quinone + NADH + 5 H(+)(in) = a quinol + NAD(+) + 4 H(+)(out). Functionally, NDH-1 shuttles electrons from NADH, via FMN and iron-sulfur (Fe-S) centers, to quinones in the respiratory chain. The immediate electron acceptor for the enzyme in this species is believed to be ubiquinone. Couples the redox reaction to proton translocation (for every two electrons transferred, four hydrogen ions are translocated across the cytoplasmic membrane), and thus conserves the redox energy in a proton gradient. The sequence is that of NADH-quinone oxidoreductase subunit A from Serratia proteamaculans (strain 568).